The following is a 243-amino-acid chain: Probable transcriptional regulatory protein PTH_1024 (243 aa).

This sequence belongs to the TACO1 family.

Its subcellular location is the cytoplasm. The chain is Probable transcriptional regulatory protein PTH_1024 from Pelotomaculum thermopropionicum (strain DSM 13744 / JCM 10971 / SI).